A 212-amino-acid polypeptide reads, in one-letter code: ER lumen protein-retaining receptor 1 (212 aa).

Topologically, residues 1-4 (MNLF) are lumenal. Residues 5–24 (RFLGDLSHLLAIILLLLKIW) form a helical membrane-spanning segment. At 25–32 (KSRSCAGI) the chain is on the cytoplasmic side. A helical membrane pass occupies residues 33-52 (SGKSQVLFAVVFTARYLDLF). The interval 47–48 (RY) is interaction with the K-D-E-L motif on target proteins. At 53 to 58 (TNYISL) the chain is on the lumenal side. Residues 59 to 79 (YNTCMKVVYIACSFTTVWMIY) traverse the membrane as a helical segment. The Cytoplasmic segment spans residues 80 to 92 (SKFKATYDGNHDT). A helical membrane pass occupies residues 93-110 (FRVEFLVVPTAILAFLVN). The Lumenal segment spans residues 111–116 (HDFTPL). Residues 117-135 (EILWTFSIYLESVAILPQL) form a helical membrane-spanning segment. Topologically, residues 136–149 (FMVSKTGEAETITS) are cytoplasmic. The chain crosses the membrane as a helical span at residues 150–168 (HYLFALGVYRTLYLFNWIW). The tract at residues 159–169 (RTLYLFNWIWR) is interaction with the K-D-E-L motif on target proteins. Residues 169–178 (RYHFEGFFDL) lie on the Lumenal side of the membrane. Residues 179-199 (IAIVAGLVQTVLYCDFFYLYI) traverse the membrane as a helical segment. Topologically, residues 200–212 (TKVLKGKKLSLPA) are cytoplasmic. The segment at 204–207 (KGKK) is important for recycling of cargo proteins with the sequence motif K-D-E-L from the Golgi to the endoplasmic reticulum. Phosphoserine; by PKA is present on Ser209.

The protein belongs to the ERD2 family. Upon ligand binding the receptor oligomerizes and interacts with components of the transport machinery such as ARFGAP1 and ARF1. In terms of processing, phosphorylation by PKA at Ser-209 is required for endoplasmic reticulum retention function.

Its subcellular location is the golgi apparatus membrane. The protein resides in the cytoplasmic vesicle. The protein localises to the COPI-coated vesicle membrane. It is found in the endoplasmic reticulum membrane. It localises to the endoplasmic reticulum-Golgi intermediate compartment membrane. Its function is as follows. Receptor for the C-terminal sequence motif K-D-E-L that is present on endoplasmic reticulum resident proteins and that mediates their recycling from the Golgi back to the endoplasmic reticulum. In Mus musculus (Mouse), this protein is ER lumen protein-retaining receptor 1 (Kdelr1).